Here is a 541-residue protein sequence, read N- to C-terminus: Glutamyl-tRNA(Gln) amidotransferase subunit B, mitochondrial (541 aa).

The protein belongs to the GatB/GatE family. GatB subfamily. As to quaternary structure, subunit of the heterotrimeric GatFAB amidotransferase (AdT) complex, composed of A, B and F subunits.

It is found in the mitochondrion. It catalyses the reaction L-glutamyl-tRNA(Gln) + L-glutamine + ATP + H2O = L-glutaminyl-tRNA(Gln) + L-glutamate + ADP + phosphate + H(+). Functionally, allows the formation of correctly charged Gln-tRNA(Gln) through the transamidation of misacylated Glu-tRNA(Gln) in the mitochondria. The reaction takes place in the presence of glutamine and ATP through an activated gamma-phospho-Glu-tRNA(Gln). The sequence is that of Glutamyl-tRNA(Gln) amidotransferase subunit B, mitochondrial from Saccharomyces cerevisiae (strain RM11-1a) (Baker's yeast).